Reading from the N-terminus, the 61-residue chain is MASKSKVAKALRTPKFSTRKENRCKFCGRPRSVYRKFGLCRICFRENANAGLIPGVRKSSW.

Positions 24, 27, 40, and 43 each coordinate Zn(2+).

It belongs to the universal ribosomal protein uS14 family. Zinc-binding uS14 subfamily. Part of the 30S ribosomal subunit. Contacts proteins S3 and S10. Zn(2+) serves as cofactor.

Its function is as follows. Binds 16S rRNA, required for the assembly of 30S particles and may also be responsible for determining the conformation of the 16S rRNA at the A site. This chain is Small ribosomal subunit protein uS14, found in Rhodopirellula baltica (strain DSM 10527 / NCIMB 13988 / SH1).